Consider the following 205-residue polypeptide: Ras-related protein Rab-1A (205 aa).

S2 is subject to N-acetylserine. 8 residues coordinate GTP: S20, G21, G23, K24, S25, C26, E38, and T43. S25 serves as a coordination point for Mg(2+). The Switch 1 signature appears at 34-48 (DTYTESYISTIGVDF). T43 is a binding site for Mg(2+). Residues K49 and K61 each participate in a glycyl lysine isopeptide (Lys-Gly) (interchain with G-Cter in ubiquitin) cross-link. Position 66 (D66) interacts with Mg(2+). The Switch 2 motif lies at 66–83 (DTAGQERFRTITSSYYRG). The GTP site is built by G69, N124, K125, D127, A155, and K156. The segment at 178 to 205 (PGATAGGAEKSNVKIQSTPVKQSGGGCC) is disordered. Position 194 is a phosphoserine (S194). S-geranylgeranyl cysteine attachment occurs at residues C204 and C205.

Belongs to the small GTPase superfamily. Rab family. As to quaternary structure, may interact with YIPF5. Interacts with C9orf72; the interaction mediates recruitment of RAB1A to the ATG1/ULK1 kinase complex. Interacts with GDI1; this promotes dissociation from membranes. It depends on Mg(2+) as a cofactor. Post-translationally, phosphorylated by CDK1 kinase during mitosis. In terms of processing, ubiquitinated via 'Lys-11'-linked ubiquitination on Lys-49 and Lys-61; impairing the recruitment of guanosine diphosphate (GDP) dissociation inhibitor 1/GDI1.

It localises to the golgi apparatus. It is found in the endoplasmic reticulum. The protein resides in the early endosome. The protein localises to the cytoplasm. Its subcellular location is the cytosol. It localises to the membrane. It is found in the melanosome. It catalyses the reaction GTP + H2O = GDP + phosphate + H(+). Its activity is regulated as follows. Regulated by guanine nucleotide exchange factors (GEFs) which promote the exchange of bound GDP for free GTP. Regulated by GTPase activating proteins (GAPs) which increase the GTP hydrolysis activity. Inhibited by GDP dissociation inhibitors (GDIs). Functionally, the small GTPases Rab are key regulators of intracellular membrane trafficking, from the formation of transport vesicles to their fusion with membranes. Rabs cycle between an inactive GDP-bound form and an active GTP-bound form that is able to recruit to membranes different sets of downstream effectors directly responsible for vesicle formation, movement, tethering and fusion. RAB1A regulates vesicular protein transport from the endoplasmic reticulum (ER) to the Golgi compartment and on to the cell surface, and plays a role in IL-8 and growth hormone secretion. Required to modulate the compacted morphology of the Golgi. Regulates the level of CASR present at the cell membrane. Plays a role in cell adhesion and cell migration, via its role in protein trafficking. Plays a role in autophagosome assembly and cellular defense reactions against pathogenic bacteria. Plays a role in microtubule-dependent protein transport by early endosomes and in anterograde melanosome transport. The polypeptide is Ras-related protein Rab-1A (RAB1A) (Canis lupus familiaris (Dog)).